The chain runs to 282 residues: Bifunctional protein FolD (282 aa).

Residues 165–167 (GRG), T192, and V233 contribute to the NADP(+) site.

The protein belongs to the tetrahydrofolate dehydrogenase/cyclohydrolase family. As to quaternary structure, homodimer.

It catalyses the reaction (6R)-5,10-methylene-5,6,7,8-tetrahydrofolate + NADP(+) = (6R)-5,10-methenyltetrahydrofolate + NADPH. The enzyme catalyses (6R)-5,10-methenyltetrahydrofolate + H2O = (6R)-10-formyltetrahydrofolate + H(+). Its pathway is one-carbon metabolism; tetrahydrofolate interconversion. In terms of biological role, catalyzes the oxidation of 5,10-methylenetetrahydrofolate to 5,10-methenyltetrahydrofolate and then the hydrolysis of 5,10-methenyltetrahydrofolate to 10-formyltetrahydrofolate. The sequence is that of Bifunctional protein FolD from Mycobacterium leprae (strain Br4923).